Consider the following 105-residue polypeptide: Class II hydrophobin 1 (105 aa).

Residues 1–15 (MQVLLIATLVASVLA) form the signal peptide. 4 disulfides stabilise this stretch: C38–C87, C48–C78, C49–C58, and C88–C99.

The protein belongs to the cerato-ulmin hydrophobin family. Homotetramer. Further self-assembles to form highly ordered films at water-air interfaces through intermolecular interactions.

Its subcellular location is the secreted. The protein localises to the cell wall. Aerial growth, conidiation, and dispersal of filamentous fungi in the environment rely upon a capability of their secreting small amphipathic proteins called hydrophobins (HPBs) with low sequence identity. Class I can self-assemble into an outermost layer of rodlet bundles on aerial cell surfaces, conferring cellular hydrophobicity that supports fungal growth, development and dispersal; whereas Class II form highly ordered films at water-air interfaces through intermolecular interactions but contribute nothing to the rodlet structure. HYD1 is a class II hydrophobin that plays roles in conidiation and cuticle-bypassing infection by regulating the transcripts of frequency clock protein frq, and velvet protein vosA, as well as primordium formation via the mitogen-activated protein kinase signaling pathway. Also participates in stress response, including tolerance of mycelia to osmotic and oxidative stresses, and conidia to high or low temperature. Acts as a defensive factor against Calcarisporium cordycipiticola infection, probably via the formation of a physical barrier to inhibit the pathogen infection owing to its hydrophobicity or binding to the effector of C.cordycipiticola, hindering the recognition of the pathogen. Finally, regulates the transcription of the AreA transcription factor at different developmental stages via a positive feedback loop. The chain is Class II hydrophobin 1 from Cordyceps militaris (Caterpillar fungus).